Consider the following 500-residue polypeptide: Putative DNA recombinase (500 aa).

In terms of domain architecture, Resolvase/invertase-type recombinase catalytic spans 1-144 (MIAIYVRVST…SGRLQKMKKG (144 aa)). Ser-9 acts as the O-(5'-phospho-DNA)-serine intermediate in catalysis. Residues 152-288 (LYGYKFVKEK…QELLGQSKRK (137 aa)) constitute a DNA-binding region (recombinase). Positions 372 to 448 (KEAEQSNHLS…IQSKMKVLDD (77 aa)) form a coiled coil.

In the N-terminal section; belongs to the site-specific recombinase resolvase family.

In terms of biological role, putative site-specific recombinase having a very important role in sporulation. It probably plays a role in the recombination of SpoIIIC and SpoIVCB to form sigma K factor. The sequence is that of Putative DNA recombinase (cisA) from Bacillus subtilis (strain 168).